A 238-amino-acid chain; its full sequence is Purine nucleoside phosphorylase DeoD-type (238 aa).

A purine D-ribonucleoside is bound at residue His-4. Phosphate contacts are provided by residues Gly-20, Arg-24, Arg-43, and 87 to 90; that span reads RVGT. Residues 179–181 and 203–204 contribute to the a purine D-ribonucleoside site; these read EME and SN.

This sequence belongs to the PNP/UDP phosphorylase family. In terms of assembly, homohexamer; trimer of homodimers.

The enzyme catalyses a purine D-ribonucleoside + phosphate = a purine nucleobase + alpha-D-ribose 1-phosphate. The catalysed reaction is a purine 2'-deoxy-D-ribonucleoside + phosphate = a purine nucleobase + 2-deoxy-alpha-D-ribose 1-phosphate. Its function is as follows. Catalyzes the reversible phosphorolytic breakdown of the N-glycosidic bond in the beta-(deoxy)ribonucleoside molecules, with the formation of the corresponding free purine bases and pentose-1-phosphate. The sequence is that of Purine nucleoside phosphorylase DeoD-type from Lacticaseibacillus casei (strain BL23) (Lactobacillus casei).